The sequence spans 598 residues: Probable translation initiation factor IF-2 (598 aa).

Residues 3–225 (LRCPIVSVLG…GLAQRFLEQK (223 aa)) enclose the tr-type G domain. Residues 12-19 (GHVDHGKT) are G1. 12-19 (GHVDHGKT) provides a ligand contact to GTP. A G2 region spans residues 37–41 (GITQH). A G3 region spans residues 76–79 (DTPG). GTP-binding positions include 76–80 (DTPGH) and 130–133 (NKVD). The G4 stretch occupies residues 130-133 (NKVD). The tract at residues 200–202 (SAM) is G5.

Belongs to the TRAFAC class translation factor GTPase superfamily. Classic translation factor GTPase family. IF-2 subfamily.

Functionally, function in general translation initiation by promoting the binding of the formylmethionine-tRNA to ribosomes. Seems to function along with eIF-2. The chain is Probable translation initiation factor IF-2 from Methanococcus maripaludis (strain DSM 14266 / JCM 13030 / NBRC 101832 / S2 / LL).